Consider the following 345-residue polypeptide: Biotin synthase (345 aa).

The 228-residue stretch at 59 to 286 (NEVQLSTLLS…TTMVRLSAGR (228 aa)) folds into the Radical SAM core domain. The [4Fe-4S] cluster site is built by cysteine 74, cysteine 78, and cysteine 81. Residues cysteine 118, cysteine 149, cysteine 209, and arginine 281 each contribute to the [2Fe-2S] cluster site.

This sequence belongs to the radical SAM superfamily. Biotin synthase family. Homodimer. [4Fe-4S] cluster is required as a cofactor. [2Fe-2S] cluster serves as cofactor.

It carries out the reaction (4R,5S)-dethiobiotin + (sulfur carrier)-SH + 2 reduced [2Fe-2S]-[ferredoxin] + 2 S-adenosyl-L-methionine = (sulfur carrier)-H + biotin + 2 5'-deoxyadenosine + 2 L-methionine + 2 oxidized [2Fe-2S]-[ferredoxin]. It functions in the pathway cofactor biosynthesis; biotin biosynthesis; biotin from 7,8-diaminononanoate: step 2/2. Catalyzes the conversion of dethiobiotin (DTB) to biotin by the insertion of a sulfur atom into dethiobiotin via a radical-based mechanism. The chain is Biotin synthase from Leptothrix cholodnii (strain ATCC 51168 / LMG 8142 / SP-6) (Leptothrix discophora (strain SP-6)).